Here is a 484-residue protein sequence, read N- to C-terminus: uncharacterized protein (484 aa).

Residues 25–45 (PLSLFVVLAAVPLPIYFSGLL) traverse the membrane as a helical segment. An EF-hand domain is found at 384–419 (LSFEETKELWVRADLDGNGVFDYEELKKIWNMTMVN). The Ca(2+) site is built by aspartate 397, aspartate 399, asparagine 401, and glutamate 408.

The protein resides in the membrane. This is an uncharacterized protein from Arabidopsis thaliana (Mouse-ear cress).